The primary structure comprises 256 residues: Small ribosomal subunit protein uS2 (256 aa).

Belongs to the universal ribosomal protein uS2 family.

This is Small ribosomal subunit protein uS2 from Methylococcus capsulatus (strain ATCC 33009 / NCIMB 11132 / Bath).